Consider the following 101-residue polypeptide: Small ribosomal subunit protein uS10 (101 aa).

The protein belongs to the universal ribosomal protein uS10 family. Part of the 30S ribosomal subunit.

Involved in the binding of tRNA to the ribosomes. This is Small ribosomal subunit protein uS10 from Flavobacterium johnsoniae (strain ATCC 17061 / DSM 2064 / JCM 8514 / BCRC 14874 / CCUG 350202 / NBRC 14942 / NCIMB 11054 / UW101) (Cytophaga johnsonae).